We begin with the raw amino-acid sequence, 63 residues long: Large ribosomal subunit protein uL29 (63 aa).

It belongs to the universal ribosomal protein uL29 family.

The protein is Large ribosomal subunit protein uL29 of Bordetella petrii (strain ATCC BAA-461 / DSM 12804 / CCUG 43448).